The chain runs to 531 residues: UDP-glucuronosyltransferase 1A3 (531 aa).

An N-terminal signal peptide occupies residues 1–25; that stretch reads MGIQGFLQKLSGLLLLLCALPWAEG. Asparagine 116, asparagine 139, asparagine 293, and asparagine 431 each carry an N-linked (GlcNAc...) asparagine glycan. Residues 489–505 traverse the membrane as a helical segment; that stretch reads VIGFLLAIVLTVVFIVY.

This sequence belongs to the UDP-glycosyltransferase family. As to quaternary structure, homodimers. Homooligomer. Interacts with UGT1A1, UGT1A4, UGT1A6, UGT1A7, UGT1A8, UGT1A9 and UGT1A10 to form heterodimers.

It localises to the endoplasmic reticulum membrane. The catalysed reaction is glucuronate acceptor + UDP-alpha-D-glucuronate = acceptor beta-D-glucuronoside + UDP + H(+). It carries out the reaction 17beta-estradiol + UDP-alpha-D-glucuronate = 17beta-estradiol 3-O-(beta-D-glucuronate) + UDP + H(+). The enzyme catalyses 17beta-estradiol + UDP-alpha-D-glucuronate = 17beta-estradiol 17-O-(beta-D-glucuronate) + UDP + H(+). It catalyses the reaction 17alpha-estradiol + UDP-alpha-D-glucuronate = 17alpha-estradiol 3-O-(beta-D-glucuronate) + UDP + H(+). The catalysed reaction is estrone + UDP-alpha-D-glucuronate = estrone 3-O-(beta-D-glucuronate) + UDP + H(+). It carries out the reaction chenodeoxycholate + UDP-alpha-D-glucuronate = chenodeoxycholoyl-24-O-(beta-D-glucuronate) + UDP. The enzyme catalyses deoxycholate + UDP-alpha-D-glucuronate = deoxycholoyl-24-O-(beta-D-glucuronate) + UDP. It catalyses the reaction lithocholate + UDP-alpha-D-glucuronate = lithocholoyl-24-O-(beta-D-glucuronate) + UDP. The catalysed reaction is hyodeoxycholate + UDP-alpha-D-glucuronate = hyodeoxycholoyl-24-O-(beta-D-glucuronate) + UDP. It carries out the reaction hyocholate + UDP-alpha-D-glucuronate = hyocholoyl-24-O-(beta-D-glucuronate) + UDP. The enzyme catalyses calcidiol + UDP-alpha-D-glucuronate = calcidiol 25-O-(beta-D-glucuronide) + UDP + H(+). It catalyses the reaction losartan + UDP-alpha-D-glucuronate = losartan-2-N-beta-D-glucuronide + UDP. The catalysed reaction is candesartan + UDP-alpha-D-glucuronate = candesartan-2-N-beta-D-glucuronide + UDP. It carries out the reaction zolasartan + UDP-alpha-D-glucuronate = zolarsartan-2-N-beta-D-glucuronide + UDP. The enzyme catalyses (E)-ferulate + UDP-alpha-D-glucuronate = (E)-4-O-(beta-D-glucuronosyl)-ferulate + UDP + H(+). It catalyses the reaction (E)-ferulate + UDP-alpha-D-glucuronate = (E)-ferulic acid beta-D-glucuronate ester + UDP. In terms of biological role, UDP-glucuronosyltransferase (UGT) that catalyzes phase II biotransformation reactions in which lipophilic substrates are conjugated with glucuronic acid to increase the metabolite's water solubility, thereby facilitating excretion into either the urine or bile. Essential for the elimination and detoxification of drugs, xenobiotics and endogenous compounds. Catalyzes the glucuronidation of endogenous estrogen hormones such as estradiol and estrone. Contributes to bile acid (BA) detoxification by catalyzing the glucuronidation of BA substrates, which are natural detergents for dietary lipids absorption. Involved in the glucuronidation of calcidiol, which is the major circulating form of vitamin D3, essential for the regulation of calcium and phosphate homeostasis. Involved in the glucuronidation of the phytochemical ferulic acid at the phenolic or the carboxylic acid group. Involved in the glucuronidation of the AGTR1 angiotensin receptor antagonists losartan, candesartan and zolarsartan, which can inhibit the effect of angiotensin II. The polypeptide is UDP-glucuronosyltransferase 1A3 (Rattus norvegicus (Rat)).